Consider the following 265-residue polypeptide: Thioredoxin-related transmembrane protein 2 homolog (265 aa).

The signal sequence occupies residues 1–32 (MLIPRLDEVRRALTAFHFFNTLLALAFPVIRS). Residues 33-96 (TSLCDYVFAV…KIAGMFLFIR (64 aa)) are Extracellular-facing. Residues 97 to 117 (ADILPGIIYILACLIVTVLFP) form a helical membrane-spanning segment. Topologically, residues 118–265 (EPVYNGPEQV…KKGAKAKKED (148 aa)) are cytoplasmic. One can recognise a Thioredoxin domain in the interval 126 to 230 (QVTYFQGEQL…RPLVNDSRRA (105 aa)). Positions 262–265 (KKED) match the Di-lysine motif motif.

It is found in the membrane. In Caenorhabditis elegans, this protein is Thioredoxin-related transmembrane protein 2 homolog.